We begin with the raw amino-acid sequence, 658 residues long: Sodium/nucleoside cotransporter 1 (658 aa).

At 1 to 75 (MEKASGRKSL…ARTFCQRHAS (75 aa)) the chain is on the cytoplasmic side. Residues 76 to 99 (LFKKILLGLLCLAYAAYFLAACIL) form a helical membrane-spanning segment. Residues 100–104 (DFQRA) are Extracellular-facing. A helical transmembrane segment spans residues 105 to 123 (LALFVITCLVILVLLLHFL). Over 124–142 (KKFLGKKLTRCLKPFKNSQ) the chain is Cytoplasmic. A helical membrane pass occupies residues 143–162 (LRLWIKRVFAGVSLVGLILW). The Extracellular segment spans residues 163-173 (LALDTAQRPEQ). The chain crosses the membrane as a helical span at residues 174–190 (LISFAGICMFVLILFAC). The Cytoplasmic segment spans residues 191–196 (SKHHSA). A helical membrane pass occupies residues 197–217 (VSWRTVFWGLGLQFVFGLLVI). Residues 218 to 256 (RTDPGFIAFQWLGDQVQIFLAYTVAGSSFVLGDTLVNDV) lie on the Extracellular side of the membrane. A helical membrane pass occupies residues 257–278 (FAFQSLPIIIFFGCVMSILYYL). Residues 279 to 289 (GLVQWVVQKIA) are Cytoplasmic-facing. Residues 290 to 313 (WFLQVTMRTTATETLAVAGNIFVG) form a helical membrane-spanning segment. The Extracellular segment spans residues 314-332 (MTEAPLLIRPYLADLTLSE). A helical transmembrane segment spans residues 333–355 (IHAVMTSGFATISGTVLGAFISF). Residues 356 to 361 (GIDASS) lie on the Cytoplasmic side of the membrane. Residues 362–381 (LISASVMGAPCALALSKLVY) form a helical membrane-spanning segment. Residues 382-418 (PEEEESKFKSKEGVKLPRGKESNVLEAASNGATDAIA) lie on the Extracellular side of the membrane. The chain crosses the membrane as a helical span at residues 419–441 (LVANVAANLVAFLAVLAFINAAL). Residues 442–452 (SWLGELVDIQG) lie on the Cytoplasmic side of the membrane. A helical membrane pass occupies residues 453 to 474 (LTFQVICSYILRPMVYMMGVEW). At 475-529 (TDCPMVAEMVGIKFFTNEFVAYQQLSQYKKKRLSGMEEWIDGQKQWISVRAEVIT) the chain is on the extracellular side. A helical membrane pass occupies residues 530 to 553 (TFSLCGFANLSSIGITLGGLTSMV). The Cytoplasmic portion of the chain corresponds to 554 to 564 (PHRKSDLSKVV). A helical membrane pass occupies residues 565–587 (IRALFTGSCVSFISACVAGILYV). The Extracellular portion of the chain corresponds to 588-658 (PRGAETDCVS…CGFYNNTVCA (71 aa)). A glycan (N-linked (GlcNAc...) asparagine) is linked at Asn-653.

It belongs to the concentrative nucleoside transporter (CNT) (TC 2.A.41) family. Post-translationally, N-glycosylated. N-glycosylation is required for localization to the plasma membrane and the transporter activity.

It is found in the cell membrane. It localises to the apical cell membrane. It catalyses the reaction uridine(out) + Na(+)(out) = uridine(in) + Na(+)(in). The catalysed reaction is thymidine(out) + Na(+)(out) = thymidine(in) + Na(+)(in). The enzyme catalyses cytidine(out) + Na(+)(out) = cytidine(in) + Na(+)(in). It carries out the reaction adenosine(out) + Na(+)(out) = adenosine(in) + Na(+)(in). Its activity is regulated as follows. Due to its high apparent affinity but slow transport, adenosine could act as a negative regulator of pyrimidine transport under some conditions. Sodium and pyrimidine nucleoside symporter of the plasma membrane that imports uridine, thymidine and cytidine into cells by coupling their transport to the transmembrane sodium electrochemical gradient. Also transports adenosine, an atypical substrate transported with high apparent affinity, but low maximum velocity. Therefore, exhibits the transport characteristics of the nucleoside transport system cit or N2 subtype (N2/cit). Involved in renal nucleoside (re)absorption. This Oryctolagus cuniculus (Rabbit) protein is Sodium/nucleoside cotransporter 1 (SLC28A1).